The sequence spans 297 residues: tRNA pseudouridine synthase B (297 aa).

The Nucleophile role is filled by Asp-39.

Belongs to the pseudouridine synthase TruB family. Type 1 subfamily.

The catalysed reaction is uridine(55) in tRNA = pseudouridine(55) in tRNA. Functionally, responsible for synthesis of pseudouridine from uracil-55 in the psi GC loop of transfer RNAs. In Lactobacillus acidophilus (strain ATCC 700396 / NCK56 / N2 / NCFM), this protein is tRNA pseudouridine synthase B.